The primary structure comprises 188 residues: Trafficking protein particle complex subunit 5 (188 aa).

A Phosphoserine modification is found at Ser10.

It belongs to the TRAPP small subunits family. BET3 subfamily. In terms of assembly, component of the multisubunit TRAPP (transport protein particle) complex, which includes at least TRAPPC2, TRAPPC2L, TRAPPC3, TRAPPC3L, TRAPPC4, TRAPPC5, TRAPPC8, TRAPPC9, TRAPPC10, TRAPPC11 and TRAPPC12.

It localises to the golgi apparatus. The protein localises to the cis-Golgi network. The protein resides in the endoplasmic reticulum. Functionally, may play a role in vesicular transport from endoplasmic reticulum to Golgi. This Mus musculus (Mouse) protein is Trafficking protein particle complex subunit 5 (Trappc5).